A 298-amino-acid polypeptide reads, in one-letter code: ATP synthase gamma chain (298 aa).

It belongs to the ATPase gamma chain family. F-type ATPases have 2 components, CF(1) - the catalytic core - and CF(0) - the membrane proton channel. CF(1) has five subunits: alpha(3), beta(3), gamma(1), delta(1), epsilon(1). CF(0) has three main subunits: a, b and c.

Its subcellular location is the cell inner membrane. In terms of biological role, produces ATP from ADP in the presence of a proton gradient across the membrane. The gamma chain is believed to be important in regulating ATPase activity and the flow of protons through the CF(0) complex. The chain is ATP synthase gamma chain from Acidithiobacillus ferridurans.